The following is a 101-amino-acid chain: Small ribosomal subunit protein uS14c (101 aa).

It belongs to the universal ribosomal protein uS14 family. As to quaternary structure, part of the 30S ribosomal subunit.

It localises to the plastid. In terms of biological role, binds 16S rRNA, required for the assembly of 30S particles. The polypeptide is Small ribosomal subunit protein uS14c (Helicosporidium sp. subsp. Simulium jonesii (Green alga)).